We begin with the raw amino-acid sequence, 160 residues long: Crossover junction endodeoxyribonuclease RuvC (160 aa).

Catalysis depends on residues aspartate 7, glutamate 70, and aspartate 142. Aspartate 7, glutamate 70, and aspartate 142 together coordinate Mg(2+).

Belongs to the RuvC family. Homodimer which binds Holliday junction (HJ) DNA. The HJ becomes 2-fold symmetrical on binding to RuvC with unstacked arms; it has a different conformation from HJ DNA in complex with RuvA. In the full resolvosome a probable DNA-RuvA(4)-RuvB(12)-RuvC(2) complex forms which resolves the HJ. It depends on Mg(2+) as a cofactor.

The protein resides in the cytoplasm. It carries out the reaction Endonucleolytic cleavage at a junction such as a reciprocal single-stranded crossover between two homologous DNA duplexes (Holliday junction).. Its function is as follows. The RuvA-RuvB-RuvC complex processes Holliday junction (HJ) DNA during genetic recombination and DNA repair. Endonuclease that resolves HJ intermediates. Cleaves cruciform DNA by making single-stranded nicks across the HJ at symmetrical positions within the homologous arms, yielding a 5'-phosphate and a 3'-hydroxyl group; requires a central core of homology in the junction. The consensus cleavage sequence is 5'-(A/T)TT(C/G)-3'. Cleavage occurs on the 3'-side of the TT dinucleotide at the point of strand exchange. HJ branch migration catalyzed by RuvA-RuvB allows RuvC to scan DNA until it finds its consensus sequence, where it cleaves and resolves the cruciform DNA. The protein is Crossover junction endodeoxyribonuclease RuvC of Ehrlichia ruminantium (strain Gardel).